A 233-amino-acid chain; its full sequence is Mediator of RNA polymerase II transcription subunit 7 (233 aa).

K185 participates in a covalent cross-link: Glycyl lysine isopeptide (Lys-Gly) (interchain with G-Cter in SUMO1); alternate. Residue K185 forms a Glycyl lysine isopeptide (Lys-Gly) (interchain with G-Cter in SUMO2); alternate linkage. Residues 188-213 are disordered; the sequence is PMDADDSNNCTGQSDQQRENSGHRRD. A Phosphoserine modification is found at S194. The span at 203 to 213 shows a compositional bias: basic and acidic residues; that stretch reads QQRENSGHRRD.

Belongs to the Mediator complex subunit 7 family. Component of the Mediator complex, which is composed of MED1, MED4, MED6, MED7, MED8, MED9, MED10, MED11, MED12, MED13, MED13L, MED14, MED15, MED16, MED17, MED18, MED19, MED20, MED21, MED22, MED23, MED24, MED25, MED26, MED27, MED29, MED30, MED31, CCNC, CDK8 and CDC2L6/CDK11. The MED12, MED13, CCNC and CDK8 subunits form a distinct module termed the CDK8 module. Mediator containing the CDK8 module is less active than Mediator lacking this module in supporting transcriptional activation. Individual preparations of the Mediator complex lacking one or more distinct subunits have been variously termed ARC, CRSP, DRIP, PC2, SMCC and TRAP.

Its subcellular location is the nucleus. In terms of biological role, component of the Mediator complex, a coactivator involved in the regulated transcription of nearly all RNA polymerase II-dependent genes. Mediator functions as a bridge to convey information from gene-specific regulatory proteins to the basal RNA polymerase II transcription machinery. Mediator is recruited to promoters by direct interactions with regulatory proteins and serves as a scaffold for the assembly of a functional preinitiation complex with RNA polymerase II and the general transcription factors. The chain is Mediator of RNA polymerase II transcription subunit 7 (MED7) from Sus scrofa (Pig).